A 425-amino-acid chain; its full sequence is Putative E3 ubiquitin-protein ligase UBR7 (425 aa).

The segment at glutamate 44–aspartate 116 adopts a UBR-type zinc-finger fold. A PHD-type; atypical zinc finger spans residues glycine 132 to arginine 188. Glycyl lysine isopeptide (Lys-Gly) (interchain with G-Cter in SUMO2) cross-links involve residues lysine 225 and lysine 252. The segment at lysine 225–aspartate 246 is disordered. A Phosphoserine modification is found at serine 264. Residue lysine 274 forms a Glycyl lysine isopeptide (Lys-Gly) (interchain with G-Cter in SUMO2) linkage. Serine 354 carries the post-translational modification Phosphoserine. Residue lysine 398 forms a Glycyl lysine isopeptide (Lys-Gly) (interchain with G-Cter in SUMO2) linkage.

Expressed in sperm (at protein level).

The catalysed reaction is S-ubiquitinyl-[E2 ubiquitin-conjugating enzyme]-L-cysteine + [acceptor protein]-L-lysine = [E2 ubiquitin-conjugating enzyme]-L-cysteine + N(6)-ubiquitinyl-[acceptor protein]-L-lysine.. Its pathway is protein modification; protein ubiquitination. Functionally, E3 ubiquitin-protein ligase which is a component of the N-end rule pathway. Recognizes and binds to proteins bearing specific N-terminal residues that are destabilizing according to the N-end rule, leading to their ubiquitination and subsequent degradation. This Homo sapiens (Human) protein is Putative E3 ubiquitin-protein ligase UBR7 (UBR7).